Reading from the N-terminus, the 100-residue chain is Large ribosomal subunit protein uL23 (100 aa).

Belongs to the universal ribosomal protein uL23 family. In terms of assembly, part of the 50S ribosomal subunit. Contacts protein L29, and trigger factor when it is bound to the ribosome.

In terms of biological role, one of the early assembly proteins it binds 23S rRNA. One of the proteins that surrounds the polypeptide exit tunnel on the outside of the ribosome. Forms the main docking site for trigger factor binding to the ribosome. The sequence is that of Large ribosomal subunit protein uL23 from Aggregatibacter actinomycetemcomitans (Actinobacillus actinomycetemcomitans).